Consider the following 189-residue polypeptide: Recombination protein RecR (189 aa).

The segment at 48-63 (CQTCFHLSAEPLCDIC) adopts a C4-type zinc-finger fold. A Toprim domain is found at 71–165 (QLLCVVADSR…QVSRIAYGLP (95 aa)).

It belongs to the RecR family.

In terms of biological role, may play a role in DNA repair. It seems to be involved in an RecBC-independent recombinational process of DNA repair. It may act with RecF and RecO. This Prochlorococcus marinus (strain MIT 9303) protein is Recombination protein RecR.